The following is a 135-amino-acid chain: Type 3 secretion system stator protein (135 aa).

Belongs to the SctL stator family. As to quaternary structure, the core secretion machinery of the T3SS is composed of approximately 20 different proteins, including cytoplasmic components, a base, an export apparatus and a needle. This subunit is part of the cytosolic complex.

It is found in the cytoplasm. Functionally, component of the type III secretion system (T3SS), also called injectisome, which is used to inject bacterial effector proteins into eukaryotic host cells. Acts as a regulator of the HrcN/SctN ATPase activity. The protein is Type 3 secretion system stator protein of Rhizobium fredii (Sinorhizobium fredii).